Here is a 379-residue protein sequence, read N- to C-terminus: MKENELKNEKSVDVLSFKQLESQKIVLPQDLFRSSFTWFCYEIYKSLAFRIWMLLWLPLSVWWKLSNNWIYPLMVSLLVLFWGPVFVLVIFRLSRKRSLSKQLTQFCKEITKSTPSSDPHDWEVVAANLNSYLYENKAWNIRYFFFNAMGCQEAFRTTLLEPFSLKKDEAAKVKSFKDSVPYIEEALGVYFREVEKQWKLFNSEKSWSPVGLEDAKLPKEAYRFKLTWFLKRISNIFMLIPFLNFLCCIYVSRGMCLLLRTLYLGWILFMLVQGFQNIRVLIMSMEHKMQFLSTIINEQESGANGWDEIARKMNRYLFEKKVWKNEEFFFDGIDCEWFFSHFFYRVLSAKKSMRALSLNVELWPYIKEAQLSCSEESLA.

4 helical membrane-spanning segments follow: residues 43 to 63 (IYKSLAFRIWMLLWLPLSVWW), 70 to 90 (IYPLMVSLLVLFWGPVFVLVI), 233 to 253 (ISNIFMLIPFLNFLCCIYVSR), and 255 to 275 (MCLLLRTLYLGWILFMLVQGF).

Belongs to the DUP/COS family.

Its subcellular location is the membrane. This chain is Protein COS4 (COS4), found in Saccharomyces cerevisiae (strain ATCC 204508 / S288c) (Baker's yeast).